Consider the following 510-residue polypeptide: Propionyl-CoA carboxylase beta chain (510 aa).

Residues 1-257 (MKDILQELEN…SNRTPAPVRP (257 aa)) enclose the CoA carboxyltransferase N-terminal domain. The segment at 1-504 (MKDILQELEN…NKKLANPWKK (504 aa)) is carboxyltransferase. The region spanning 264–504 (RIEDSLDTLI…NKKLANPWKK (241 aa)) is the CoA carboxyltransferase C-terminal domain.

This sequence belongs to the AccD/PCCB family. In terms of assembly, probably a dodecamer composed of six biotin-containing alpha subunits and six beta subunits.

It carries out the reaction propanoyl-CoA + hydrogencarbonate + ATP = (S)-methylmalonyl-CoA + ADP + phosphate + H(+). The protein operates within metabolic intermediate metabolism; propanoyl-CoA degradation; succinyl-CoA from propanoyl-CoA: step 1/3. The sequence is that of Propionyl-CoA carboxylase beta chain from Cereibacter sphaeroides (strain ATCC 17023 / DSM 158 / JCM 6121 / CCUG 31486 / LMG 2827 / NBRC 12203 / NCIMB 8253 / ATH 2.4.1.) (Rhodobacter sphaeroides).